Reading from the N-terminus, the 182-residue chain is Protein YIPF6 homolog (182 aa).

Residues 1-45 are Cytoplasmic-facing; that stretch reads MIESENPNTLDEPVIQTILRDLKMIGFKLYHVILPRGNAANVLRD. The chain crosses the membrane as a helical span at residues 46–66; the sequence is WDLWGPLILCLVMAIFLSISA. The Lumenal portion of the chain corresponds to 67-70; the sequence is EEQK. Residues 71–91 form a helical membrane-spanning segment; it reads ALEFTIVFVVVWCGAAIVTVN. The Cytoplasmic segment spans residues 92-104; that stretch reads GQLLCGNISFFQS. Residues 105 to 125 traverse the membrane as a helical segment; sequence VCILGYCIFPLTIATIIIWII. The Lumenal segment spans residues 126-133; that stretch reads QNFTMIVK. The helical transmembrane segment at 134 to 154 threads the bilayer; sequence LPIVGGAWFWSSFASYGFLGS. Residues 155–161 lie on the Cytoplasmic side of the membrane; that stretch reads SVPESRR. Residues 162–182 form a helical membrane-spanning segment; the sequence is LLAVYPVLLFYLVIAWLVVVQ.

Belongs to the YIP1 family.

It is found in the golgi apparatus membrane. The protein is Protein YIPF6 homolog (yipf6) of Dictyostelium discoideum (Social amoeba).